The chain runs to 382 residues: Histidinol-phosphate aminotransferase (382 aa).

The disordered stretch occupies residues 1–28; the sequence is MTSAPRPRPTLDDLPLREDLRGKSPYGA. The span at 9–22 shows a compositional bias: basic and acidic residues; it reads PTLDDLPLREDLRG. Lys233 is subject to N6-(pyridoxal phosphate)lysine.

It belongs to the class-II pyridoxal-phosphate-dependent aminotransferase family. Histidinol-phosphate aminotransferase subfamily. Homodimer. Requires pyridoxal 5'-phosphate as cofactor.

It catalyses the reaction L-histidinol phosphate + 2-oxoglutarate = 3-(imidazol-4-yl)-2-oxopropyl phosphate + L-glutamate. It participates in amino-acid biosynthesis; L-histidine biosynthesis; L-histidine from 5-phospho-alpha-D-ribose 1-diphosphate: step 7/9. The protein is Histidinol-phosphate aminotransferase of Mycobacterium marinum (strain ATCC BAA-535 / M).